A 344-amino-acid chain; its full sequence is Centromere protein N (344 aa).

It belongs to the CENP-N/CHL4 family.

The protein resides in the nucleus. The protein localises to the chromosome. Its subcellular location is the centromere. Probable component of a centromeric complex involved in assembly of kinetochore proteins, mitotic progression and chromosome segregation. The protein is Centromere protein N (CENPN) of Gallus gallus (Chicken).